The following is a 337-amino-acid chain: Viral cathepsin (337 aa).

The signal sequence occupies residues 1–16 (MNKILILLLLVSAVLT). Residues 17 to 126 (SHDQVVAVTI…VVDGPGQRQR (110 aa)) constitute a propeptide, activation peptide. 3 disulfides stabilise this stretch: Cys-147–Cys-188, Cys-181–Cys-221, and Cys-276–Cys-324. Cys-150 is an active-site residue. Catalysis depends on residues His-283 and Asn-303.

The protein belongs to the peptidase C1 family. In terms of processing, synthesized as an inactive proenzyme and activated by proteolytic removal of the inhibitory propeptide.

It catalyses the reaction Endopeptidase of broad specificity, hydrolyzing substrates of both cathepsin L and cathepsin B.. In terms of biological role, cysteine protease that plays an essential role in host liquefaction to facilitate horizontal transmission of the virus. May participate in the degradation of foreign protein expressed by the baculovirus system. The sequence is that of Viral cathepsin (VCATH) from Mamestra configurata (bertha armyworm).